Here is a 155-residue protein sequence, read N- to C-terminus: Late embryogenesis abundant protein 2 (155 aa).

The disordered stretch occupies residues 1 to 155 (MTSHDQSYRA…DKDHFPTNRH (155 aa)). Composition is skewed to basic and acidic residues over residues 11–21 (GEAKGRTEEKT) and 28–39 (IEDKAQAAKEKA). Over residues 40–78 (QQAAQTAKDKTSQTAQAAKEKTQQTAQAAKDKTQQTTQA) the composition is skewed to low complexity. 2 consecutive repeat copies span residues 53 to 63 (TAQAAKEKTQQ) and 64 to 74 (TAQAAKDKTQQ). The segment at 53 to 74 (TAQAAKEKTQQTAQAAKDKTQQ) is 2 X 11 AA approximate tandem repeats of T-A-Q-A-A-K-E-K-T-Q-Q. Positions 79–95 (TKEKAQDTTGRAKEKGS) are enriched in basic and acidic residues. Positions 97–120 (MGQSTKETAQSGKDNSAGFLQQTG) are enriched in polar residues. Residues 144–155 (DQDKDHFPTNRH) are compositionally biased toward basic and acidic residues.

The protein belongs to the LEA type 4 family. In terms of tissue distribution, highest expression is found in seeds. No expression detected in adult tissues.

The sequence is that of Late embryogenesis abundant protein 2 from Cicer arietinum (Chickpea).